Reading from the N-terminus, the 347-residue chain is tRNA dimethylallyltransferase (347 aa).

20-27 (GPTASGKT) is a binding site for ATP. 22 to 27 (TASGKT) contributes to the substrate binding site. 3 interaction with substrate tRNA regions span residues 45–48 (DSAM), 169–173 (QRLMR), and 275–280 (RCVGYR).

Belongs to the IPP transferase family. Monomer. Mg(2+) serves as cofactor.

The enzyme catalyses adenosine(37) in tRNA + dimethylallyl diphosphate = N(6)-dimethylallyladenosine(37) in tRNA + diphosphate. Functionally, catalyzes the transfer of a dimethylallyl group onto the adenine at position 37 in tRNAs that read codons beginning with uridine, leading to the formation of N6-(dimethylallyl)adenosine (i(6)A). In Marinobacter nauticus (strain ATCC 700491 / DSM 11845 / VT8) (Marinobacter aquaeolei), this protein is tRNA dimethylallyltransferase.